Consider the following 184-residue polypeptide: ADP-ribosylation factor-like protein 8c (184 aa).

Residues 1 to 18 (MGLWDSLLNWLRSLFFKQ) constitute an intramembrane region (note=Mediates targeting to membranes). GTP-binding positions include 29 to 34 (NAGKTS), 48 to 51 (MIPT), 70 to 74 (DLGGQ), and 129 to 132 (NKID).

The protein belongs to the small GTPase superfamily. Arf family. In terms of assembly, interacts with tubulin.

It is found in the late endosome membrane. The protein localises to the lysosome membrane. It localises to the cytoplasm. The protein resides in the cytoskeleton. Its subcellular location is the spindle. In terms of biological role, may play a role in lysosome motility. May play a role in chromosome segregation. (Microbial infection) Component of tomato mosaic virus (ToMV) RNA replication complexes. Required for tobamovirus multiplication, especially for efficient negative-strand RNA synthesis and viral RNA capping. This is ADP-ribosylation factor-like protein 8c from Arabidopsis thaliana (Mouse-ear cress).